The primary structure comprises 129 residues: DNA-directed RNA polymerase II subunit RPB9 (129 aa).

Residues Cys21, Cys24, Cys43, Cys46, Cys90, Cys93, Cys118, and Cys123 each coordinate Zn(2+). The segment at Cys21 to Cys46 adopts a C4-type zinc-finger fold. The TFIIS-type zinc finger occupies Glu86–Thr128.

The protein belongs to the archaeal RpoM/eukaryotic RPA12/RPB9/RPC11 RNA polymerase family. In terms of assembly, component of the RNA polymerase II (Pol II) complex consisting of 12 subunits.

The protein localises to the nucleus. Its subcellular location is the nucleolus. In terms of biological role, DNA-dependent RNA polymerase catalyzes the transcription of DNA into RNA using the four ribonucleoside triphosphates as substrates. Component of RNA polymerase II which synthesizes mRNA precursors and many functional non-coding RNAs. Pol II is the central component of the basal RNA polymerase II transcription machinery. It is composed of mobile elements that move relative to each other. RPB9 is part of the upper jaw surrounding the central large cleft and thought to grab the incoming DNA template. In Drosophila melanogaster (Fruit fly), this protein is DNA-directed RNA polymerase II subunit RPB9.